The sequence spans 530 residues: Tyrosinase (530 aa).

An N-terminal signal peptide occupies residues 1–17 (MLLAALYCLLWSFRTSA). Over 19–473 (HFPRACASSK…IKPYLEQAQR (455 aa)) the chain is Lumenal, melanosome. N-linked (GlcNAc...) asparagine glycosylation is present at asparagine 86. Histidine 180, histidine 202, and histidine 211 together coordinate Cu cation. N-linked (GlcNAc...) asparagine glycans are attached at residues asparagine 230, asparagine 290, and asparagine 337. The Cu cation site is built by histidine 363 and histidine 367. Asparagine 371 carries an N-linked (GlcNAc...) asparagine glycan. Residue histidine 390 coordinates Cu cation. A helical transmembrane segment spans residues 474–494 (IWPWLIGAAVVGSVLTAVLGG). The Cytoplasmic segment spans residues 495-530 (LTSLLCRRKRNQLPEEKQPLLMEKEDYHNLMYQSHL).

It belongs to the tyrosinase family. As to quaternary structure, forms an OPN3-dependent complex with DCT in response to blue light in melanocytes. Cu(2+) is required as a cofactor. Glycosylated.

The protein localises to the melanosome membrane. Its subcellular location is the melanosome. It carries out the reaction 2 L-dopa + O2 = 2 L-dopaquinone + 2 H2O. It catalyses the reaction L-tyrosine + O2 = L-dopaquinone + H2O. The enzyme catalyses 2 5,6-dihydroxyindole-2-carboxylate + O2 = 2 indole-5,6-quinone-2-carboxylate + 2 H2O. Functionally, this is a copper-containing oxidase that functions in the formation of pigments such as melanins and other polyphenolic compounds. Catalyzes the initial and rate limiting step in the cascade of reactions leading to melanin production from tyrosine. In addition to hydroxylating tyrosine to DOPA (3,4-dihydroxyphenylalanine), also catalyzes the oxidation of DOPA to DOPA-quinone, and possibly the oxidation of DHI (5,6-dihydroxyindole) to indole-5,6 quinone. This chain is Tyrosinase (TYR), found in Bos taurus (Bovine).